The primary structure comprises 142 residues: Large ribosomal subunit protein uL11 (142 aa).

It belongs to the universal ribosomal protein uL11 family. As to quaternary structure, part of the ribosomal stalk of the 50S ribosomal subunit. Interacts with L10 and the large rRNA to form the base of the stalk. L10 forms an elongated spine to which L12 dimers bind in a sequential fashion forming a multimeric L10(L12)X complex. One or more lysine residues are methylated.

Functionally, forms part of the ribosomal stalk which helps the ribosome interact with GTP-bound translation factors. This is Large ribosomal subunit protein uL11 from Histophilus somni (strain 129Pt) (Haemophilus somnus).